Here is a 968-residue protein sequence, read N- to C-terminus: RNA polymerase-associated protein RapA (968 aa).

Residues 164–334 enclose the Helicase ATP-binding domain; it reads DVGRRHAPRV…FARLRLLDPN (171 aa). An ATP-binding site is contributed by 177–184; sequence DEVGLGKT. The short motif at 280 to 283 is the DEAH box element; it reads DEAH. The Helicase C-terminal domain maps to 490-685; sequence RVEWLMGYLT…ALKAQLEQGR (196 aa).

This sequence belongs to the SNF2/RAD54 helicase family. RapA subfamily. Interacts with the RNAP. Has a higher affinity for the core RNAP than for the holoenzyme. Its ATPase activity is stimulated by binding to RNAP.

Functionally, transcription regulator that activates transcription by stimulating RNA polymerase (RNAP) recycling in case of stress conditions such as supercoiled DNA or high salt concentrations. Probably acts by releasing the RNAP, when it is trapped or immobilized on tightly supercoiled DNA. Does not activate transcription on linear DNA. Probably not involved in DNA repair. This Salmonella paratyphi C (strain RKS4594) protein is RNA polymerase-associated protein RapA.